A 79-amino-acid polypeptide reads, in one-letter code: Protein GOLVEN 2 (79 aa).

Residues 1 to 26 form the signal peptide; the sequence is MAIRVSHKSFLVALLLILFISSPTQA. A propeptide spanning residues 27 to 65 is cleaved from the precursor; that stretch reads RSLREVVRNRTLLVVEKSQESRKIRHEGGGSDVDGLMDM. Residues 49-79 form a disordered region; that stretch reads KIRHEGGGSDVDGLMDMDYNSANKKRPIHNR. The residue at position 67 (Y67) is a Sulfotyrosine. At P75 the chain carries Hydroxyproline.

This sequence belongs to the RGF family. In terms of assembly, binds to LRR receptor-like serine/threonine-protein kinases to trigger their dimerization with SERK proteins and subsequent signaling. Expressed in siliques, stems, hypocotyls, shoot apex, leaves, flowers and cotyledons, and, to a lower extent, in roots.

It localises to the secreted. The protein resides in the endoplasmic reticulum. Signaling peptide (root growth factor) that regulates the pattern of root growth and lateral root development by modulating the length and the number of cortical cells in the root apical meristem (RAM), and the anticlinal asymmetric cell divisions in lateral root initiation cells. Also involved in the regulation of hypocotyl bending and root gravitropism, probably by influencing the formation of auxin gradients. Maintains the postembryonic root stem cell niche. This chain is Protein GOLVEN 2, found in Arabidopsis thaliana (Mouse-ear cress).